A 132-amino-acid polypeptide reads, in one-letter code: Small ribosomal subunit protein uS8 (132 aa).

The protein belongs to the universal ribosomal protein uS8 family. Part of the 30S ribosomal subunit. Contacts proteins S5 and S12.

In terms of biological role, one of the primary rRNA binding proteins, it binds directly to 16S rRNA central domain where it helps coordinate assembly of the platform of the 30S subunit. The chain is Small ribosomal subunit protein uS8 from Rickettsia massiliae (strain Mtu5).